The following is a 310-amino-acid chain: 4-hydroxyproline 2-epimerase (310 aa).

Residue Cys88 is the Proton acceptor of the active site. Substrate contacts are provided by residues 89–90, His208, and Asp232; that span reads GH. The active-site Proton donor is the Cys236. 237–238 contributes to the substrate binding site; it reads GT.

It belongs to the proline racemase family.

The catalysed reaction is trans-4-hydroxy-L-proline = cis-4-hydroxy-D-proline. Its function is as follows. Catalyzes the epimerization of trans-4-hydroxy-L-proline (t4LHyp) to cis-4-hydroxy-D-proline (c4DHyp). Is likely involved in a degradation pathway that converts t4LHyp to alpha-ketoglutarate. Displays no proline racemase activity. The sequence is that of 4-hydroxyproline 2-epimerase from Burkholderia cenocepacia (strain ATCC BAA-245 / DSM 16553 / LMG 16656 / NCTC 13227 / J2315 / CF5610) (Burkholderia cepacia (strain J2315)).